We begin with the raw amino-acid sequence, 301 residues long: GTPase Era (301 aa).

Positions 4-173 (KAGFVALIGK…LECISKHLSP (170 aa)) constitute an Era-type G domain. Positions 12-19 (GKPNAGKS) are G1. Residue 12–19 (GKPNAGKS) participates in GTP binding. The tract at residues 38-42 (NATRK) is G2. A G3 region spans residues 64-67 (DTPG). GTP contacts are provided by residues 64-68 (DTPGL) and 122-125 (SKID). Residues 122–125 (SKID) form a G4 region. The segment at 152–154 (LSA) is G5. One can recognise a KH type-2 domain in the interval 204 to 280 (LSDEIPYESD…FLNLQVIAQK (77 aa)).

It belongs to the TRAFAC class TrmE-Era-EngA-EngB-Septin-like GTPase superfamily. Era GTPase family. As to quaternary structure, monomer.

The protein resides in the cytoplasm. The protein localises to the cell inner membrane. An essential GTPase that binds both GDP and GTP, with rapid nucleotide exchange. Plays a role in 16S rRNA processing and 30S ribosomal subunit biogenesis and possibly also in cell cycle regulation and energy metabolism. This Helicobacter pylori (strain Shi470) protein is GTPase Era.